The chain runs to 524 residues: Mitochondrial-processing peptidase subunit alpha (524 aa).

A mitochondrion-targeting transit peptide spans 1–32 (MATAVWAAARLLRGSAALCARPKFGSPAHRRF). At K63 the chain carries N6-succinyllysine.

This sequence belongs to the peptidase M16 family. Heterodimer of PMPCA (alpha) and PMPCB (beta) subunits, forming the mitochondrial processing protease (MPP) in which PMPCA is involved in substrate recognition and binding and PMPCB is the catalytic subunit.

It is found in the mitochondrion matrix. The protein resides in the mitochondrion inner membrane. In terms of biological role, substrate recognition and binding subunit of the essential mitochondrial processing protease (MPP), which cleaves the mitochondrial sequence off newly imported precursors proteins. This Rattus norvegicus (Rat) protein is Mitochondrial-processing peptidase subunit alpha (Pmpca).